The sequence spans 393 residues: Homoserine O-succinyltransferase (393 aa).

An AB hydrolase-1 domain is found at 62-372; the sequence is NAVLVCHALN…PHGHDAFLLD (311 aa). Ser-168 (nucleophile) is an active-site residue. Arg-238 provides a ligand contact to substrate. Active-site residues include Asp-333 and His-366. A substrate-binding site is contributed by Asp-367.

Belongs to the AB hydrolase superfamily. MetX family. Homodimer.

It is found in the cytoplasm. The catalysed reaction is L-homoserine + succinyl-CoA = O-succinyl-L-homoserine + CoA. It functions in the pathway amino-acid biosynthesis; L-methionine biosynthesis via de novo pathway; O-succinyl-L-homoserine from L-homoserine: step 1/1. In terms of biological role, transfers a succinyl group from succinyl-CoA to L-homoserine, forming succinyl-L-homoserine. In Cupriavidus necator (strain ATCC 17699 / DSM 428 / KCTC 22496 / NCIMB 10442 / H16 / Stanier 337) (Ralstonia eutropha), this protein is Homoserine O-succinyltransferase.